Reading from the N-terminus, the 347-residue chain is Aspartate-semialdehyde dehydrogenase (347 aa).

NADP(+) is bound by residues 10 to 13 (TGMV) and 37 to 38 (RS). Arginine 108 provides a ligand contact to phosphate. Residue cysteine 147 is the Acyl-thioester intermediate of the active site. Residue glutamine 174 participates in substrate binding. 177 to 178 (SG) contacts NADP(+). Glutamate 200 provides a ligand contact to substrate. Lysine 203 is a phosphate binding site. Arginine 233 lines the substrate pocket. Residue histidine 240 is the Proton acceptor of the active site. Positions 276–299 (APEKPVVVRDEENRPQPRMDRDMD) are disordered. Over residues 281-299 (VVVRDEENRPQPRMDRDMD) the composition is skewed to basic and acidic residues. Position 327–328 (327–328 (NT)) interacts with NADP(+).

Belongs to the aspartate-semialdehyde dehydrogenase family. As to quaternary structure, homodimer.

It carries out the reaction L-aspartate 4-semialdehyde + phosphate + NADP(+) = 4-phospho-L-aspartate + NADPH + H(+). It participates in amino-acid biosynthesis; L-lysine biosynthesis via DAP pathway; (S)-tetrahydrodipicolinate from L-aspartate: step 2/4. The protein operates within amino-acid biosynthesis; L-methionine biosynthesis via de novo pathway; L-homoserine from L-aspartate: step 2/3. It functions in the pathway amino-acid biosynthesis; L-threonine biosynthesis; L-threonine from L-aspartate: step 2/5. Its function is as follows. Catalyzes the NADPH-dependent formation of L-aspartate-semialdehyde (L-ASA) by the reductive dephosphorylation of L-aspartyl-4-phosphate. The chain is Aspartate-semialdehyde dehydrogenase from Methanothermobacter thermautotrophicus (strain ATCC 29096 / DSM 1053 / JCM 10044 / NBRC 100330 / Delta H) (Methanobacterium thermoautotrophicum).